The primary structure comprises 307 residues: Fructokinase (307 aa).

Belongs to the carbohydrate kinase PfkB family.

It catalyses the reaction D-fructose + ATP = D-fructose 6-phosphate + ADP + H(+). This is Fructokinase (scrK) from Salmonella typhimurium.